Here is a 715-residue protein sequence, read N- to C-terminus: ATP-dependent DNA helicase Hel308 (715 aa).

The Q motif signature appears at 1 to 29; it reads MKVEELRIDERIKEVLKKRGISELYPPQA. ATP contacts are provided by residues Gln28 and 46–53; that span reads IPTASGKT. A Helicase ATP-binding domain is found at 33–197; it reads TSGILKGENA…WLNAKLIKSD (165 aa). The DEAH box signature appears at 145–148; that stretch reads DEIH. A Helicase C-terminal domain is found at 229-422; sequence LVYDAIKRSK…ILRGQILALI (194 aa).

This sequence belongs to the helicase family. Hel308 subfamily. Monomer.

It carries out the reaction Couples ATP hydrolysis with the unwinding of duplex DNA by translocating in the 3'-5' direction.. It catalyses the reaction ATP + H2O = ADP + phosphate + H(+). DNA-dependent ATPase and 3'-5' DNA helicase that may be involved in repair of stalled replication forks. The polypeptide is ATP-dependent DNA helicase Hel308 (Pyrococcus horikoshii (strain ATCC 700860 / DSM 12428 / JCM 9974 / NBRC 100139 / OT-3)).